The following is a 422-amino-acid chain: Putative polyketide beta-ketoacyl synthase 1 (422 aa).

In terms of domain architecture, Ketosynthase family 3 (KS3) spans 2–416; the sequence is TRRVAVTGIG…GFQSAVLLTG (415 aa). Catalysis depends on for beta-ketoacyl synthase activity residues cysteine 169, histidine 309, and histidine 346.

The protein belongs to the thiolase-like superfamily. Beta-ketoacyl-ACP synthases family.

The protein operates within antibiotic biosynthesis; curamycin biosynthesis. The chain is Putative polyketide beta-ketoacyl synthase 1 (curA) from Streptomyces cyaneus (Streptomyces curacoi).